We begin with the raw amino-acid sequence, 159 residues long: Ribosome maturation factor RimP (159 aa).

This sequence belongs to the RimP family.

Its subcellular location is the cytoplasm. Its function is as follows. Required for maturation of 30S ribosomal subunits. This chain is Ribosome maturation factor RimP, found in Streptococcus pneumoniae serotype 2 (strain D39 / NCTC 7466).